The primary structure comprises 112 residues: Nitrogen regulatory protein P-II (112 aa).

Tyr51 is modified (O-UMP-tyrosine).

This sequence belongs to the P(II) protein family. In terms of assembly, homotrimer.

Functionally, in nitrogen-limiting conditions, when the ratio of Gln to 2-ketoglutarate decreases, P-II is uridylylated to P-II-UMP. P-II-UMP allows the deadenylation of glutamine synthetase (GS), thus activating the enzyme. Conversely, in nitrogen excess P-II is deuridylated and promotes the adenylation of GS. P-II indirectly controls the transcription of the GS gene (glnA). P-II prevents NR-II-catalyzed conversion of NR-I to NR-I-phosphate, the transcriptional activator of glnA. When P-II is uridylylated to P-II-UMP, these events are reversed. This chain is Nitrogen regulatory protein P-II (glnB), found in Rhizobium etli (strain ATCC 51251 / DSM 11541 / JCM 21823 / NBRC 15573 / CFN 42).